Here is a 392-residue protein sequence, read N- to C-terminus: NADH-quinone oxidoreductase subunit D (392 aa).

It belongs to the complex I 49 kDa subunit family. In terms of assembly, NDH-1 is composed of 14 different subunits. Subunits NuoB, C, D, E, F, and G constitute the peripheral sector of the complex.

It localises to the cell inner membrane. It carries out the reaction a quinone + NADH + 5 H(+)(in) = a quinol + NAD(+) + 4 H(+)(out). Its function is as follows. NDH-1 shuttles electrons from NADH, via FMN and iron-sulfur (Fe-S) centers, to quinones in the respiratory chain. The immediate electron acceptor for the enzyme in this species is believed to be ubiquinone. Couples the redox reaction to proton translocation (for every two electrons transferred, four hydrogen ions are translocated across the cytoplasmic membrane), and thus conserves the redox energy in a proton gradient. This Rhodospirillum rubrum (strain ATCC 11170 / ATH 1.1.1 / DSM 467 / LMG 4362 / NCIMB 8255 / S1) protein is NADH-quinone oxidoreductase subunit D.